Consider the following 614-residue polypeptide: Chaperone protein DnaK (614 aa).

Phosphothreonine; by autocatalysis is present on Thr-174. Residues 576-614 (QTGGAAPGPDMGADPGAGGAQGDDNVVDAEYTEVDKDQK) are disordered. The segment covering 578–589 (GGAAPGPDMGAD) has biased composition (low complexity).

The protein belongs to the heat shock protein 70 family.

In terms of biological role, acts as a chaperone. The polypeptide is Chaperone protein DnaK (Desulfitobacterium hafniense (strain DSM 10664 / DCB-2)).